The chain runs to 357 residues: Glucose-6-phosphatase catalytic subunit 1 (357 aa).

Topologically, residues 1–28 (MEKGMNVLHDFGIQSTHYLQVNYQDSQD) are lumenal. A helical transmembrane segment spans residues 29 to 49 (WFILVSVIADLRNAFYVLFPI). Residues 50–60 (WFHLREAVGIK) lie on the Cytoplasmic side of the membrane. Residues 61–81 (LLWVAVIGDWLNLVFKWILFG) form a helical membrane-spanning segment. Topologically, residues 82–117 (QRPYWWVMDTDYYSNASVPLIKQFPVTCETGPGSPS) are lumenal. Residue Arg83 participates in substrate binding. The N-linked (GlcNAc...) asparagine glycan is linked to Asn96. Residues 118-138 (GHAMGTAGVYYVMVTSTLSMF) form a helical membrane-spanning segment. His119 (proton donor) is an active-site residue. Over 139–147 (RGKKKPTYR) the chain is Cytoplasmic. Residues 148-168 (FRCLNVILWLGFWAVQLNVCL) traverse the membrane as a helical segment. The Lumenal segment spans residues 169–170 (SR). Arg170 is a substrate binding site. Residues 171–191 (IYLAAHFPHQVVAGVLSGIAV) form a helical membrane-spanning segment. Catalysis depends on His176, which acts as the Nucleophile. At 192–209 (AETFRHIQSIYNASLKKY) the chain is on the cytoplasmic side. The helical transmembrane segment at 210-230 (FFITFFLLSFAIGFYLLLKGL) threads the bilayer. The Lumenal portion of the chain corresponds to 231-254 (GVDLLWTLEKARRWCERPEWVHID). A helical membrane pass occupies residues 255–275 (TTPFASLLKNVGTLFGLGLAL). Residues 276–291 (NSSMYRESCKGTLSKW) lie on the Cytoplasmic side of the membrane. The helical transmembrane segment at 292–312 (FPFRLSCIVVSLILLHLFDSL) threads the bilayer. At 313 to 320 (KPPSQIEL) the chain is on the lumenal side. Residues 321 to 341 (IFYVLSFCKSAAVPLASVSLI) form a helical membrane-spanning segment. Residues 342–357 (PYCLARVLGQPDKKSL) are Cytoplasmic-facing. The short motif at 354–357 (KKSL) is the Prevents secretion from ER element.

Belongs to the glucose-6-phosphatase family.

It localises to the endoplasmic reticulum membrane. It carries out the reaction D-glucose 6-phosphate + H2O = D-glucose + phosphate. It participates in carbohydrate biosynthesis; gluconeogenesis. Functionally, hydrolyzes glucose-6-phosphate to glucose in the endoplasmic reticulum. Forms with the glucose-6-phosphate transporter (SLC37A4/G6PT) the complex responsible for glucose production in the terminal step of glycogenolysis and gluconeogenesis. Hence, it is the key enzyme in homeostatic regulation of blood glucose levels. This chain is Glucose-6-phosphatase catalytic subunit 1 (G6PC1), found in Felis catus (Cat).